We begin with the raw amino-acid sequence, 441 residues long: Trigger factor (441 aa).

The region spanning 161-246 (GDMVTVDFQG…VKDVKERILA (86 aa)) is the PPIase FKBP-type domain.

The protein belongs to the FKBP-type PPIase family. Tig subfamily.

Its subcellular location is the cytoplasm. The enzyme catalyses [protein]-peptidylproline (omega=180) = [protein]-peptidylproline (omega=0). Involved in protein export. Acts as a chaperone by maintaining the newly synthesized protein in an open conformation. Functions as a peptidyl-prolyl cis-trans isomerase. The protein is Trigger factor of Desulfotalea psychrophila (strain LSv54 / DSM 12343).